The following is a 570-amino-acid chain: Glycine--tRNA ligase (570 aa).

Substrate is bound by residues arginine 99 and glutamate 165. Residues 197–199 (RNE), 207–212 (LRLREF), 324–325 (EC), and 443–446 (GIDR) each bind ATP. Substrate is bound at residue 212–216 (FTQAE). 439–443 (EPSFG) provides a ligand contact to substrate.

It belongs to the class-II aminoacyl-tRNA synthetase family.

It localises to the cytoplasm. It carries out the reaction tRNA(Gly) + glycine + ATP = glycyl-tRNA(Gly) + AMP + diphosphate. Functionally, catalyzes the attachment of glycine to tRNA(Gly). In Thermococcus kodakarensis (strain ATCC BAA-918 / JCM 12380 / KOD1) (Pyrococcus kodakaraensis (strain KOD1)), this protein is Glycine--tRNA ligase.